A 106-amino-acid chain; its full sequence is Thioredoxin (106 aa).

The Thioredoxin domain maps to 2 to 106 (SHYIELTEEN…LKEQLNKLLG (105 aa)). A disulfide bond links cysteine 30 and cysteine 33.

It belongs to the thioredoxin family.

Participates in various redox reactions through the reversible oxidation of its active center dithiol to a disulfide and catalyzes dithiol-disulfide exchange reactions. In Helicobacter pylori (strain J99 / ATCC 700824) (Campylobacter pylori J99), this protein is Thioredoxin (trxA).